The following is a 144-amino-acid chain: Large ribosomal subunit protein uL16 (144 aa).

Belongs to the universal ribosomal protein uL16 family. Part of the 50S ribosomal subunit.

In terms of biological role, binds 23S rRNA and is also seen to make contacts with the A and possibly P site tRNAs. The sequence is that of Large ribosomal subunit protein uL16 from Lacticaseibacillus paracasei (strain ATCC 334 / BCRC 17002 / CCUG 31169 / CIP 107868 / KCTC 3260 / NRRL B-441) (Lactobacillus paracasei).